Consider the following 367-residue polypeptide: Putative transport protein MT0215 (367 aa).

9 helical membrane passes run 18–38, 41–61, 74–94, 161–181, 228–248, 249–269, 270–290, 314–334, and 337–357; these read AAWA…LWVL, FEVI…LVPP, VAVT…LTFV, ITEL…FLYG, AGVG…LASL, VFFG…LAVV, VALL…LIAV, VVLA…LLAV, and VAFF…ADVA.

It belongs to the autoinducer-2 exporter (AI-2E) (TC 2.A.86) family.

It is found in the cell membrane. The protein is Putative transport protein MT0215 of Mycobacterium tuberculosis (strain CDC 1551 / Oshkosh).